A 677-amino-acid chain; its full sequence is High-affinity choline transport protein (677 aa).

The next 12 membrane-spanning stretches (helical) occupy residues Pro15–Phe35, Phe54–Cys74, Leu94–Val114, Phe144–Phe164, Ile196–Gln216, Ala233–Val253, Val265–Leu285, Trp319–Ala339, Phe350–Gly370, Val412–Leu432, Val452–Ser472, and Thr477–Tyr497.

This sequence belongs to the BCCT transporter (TC 2.A.15) family.

The protein localises to the cell inner membrane. It catalyses the reaction choline(in) + H(+)(in) = choline(out) + H(+)(out). It participates in amine and polyamine biosynthesis; betaine biosynthesis via choline pathway. Functionally, high-affinity uptake of choline driven by a proton-motive force. The chain is High-affinity choline transport protein (betT) from Escherichia coli O157:H7.